The following is a 359-amino-acid chain: S-adenosylmethionine:tRNA ribosyltransferase-isomerase (359 aa).

The protein belongs to the QueA family. As to quaternary structure, monomer.

The protein localises to the cytoplasm. It catalyses the reaction 7-aminomethyl-7-carbaguanosine(34) in tRNA + S-adenosyl-L-methionine = epoxyqueuosine(34) in tRNA + adenine + L-methionine + 2 H(+). The protein operates within tRNA modification; tRNA-queuosine biosynthesis. Its function is as follows. Transfers and isomerizes the ribose moiety from AdoMet to the 7-aminomethyl group of 7-deazaguanine (preQ1-tRNA) to give epoxyqueuosine (oQ-tRNA). This is S-adenosylmethionine:tRNA ribosyltransferase-isomerase from Colwellia psychrerythraea (strain 34H / ATCC BAA-681) (Vibrio psychroerythus).